A 1183-amino-acid chain; its full sequence is MGLLQGQLTHALACRHCSSITCLHSPGNLAILVLFMVWQIRRWWQLRGWQQLQPWCSGDKMTQGKGLQLLYHLAFFDCLWKQKSEEEEKEEKECLSLNPLKPYHLSKDTPIGNGFSTAPPHPSCRSEGRPRATETQEQVLIQSPSPSRSFPTFQTLTNLPVRSKRASGSSPQQTKLQLFSGLPSLYNESLKTIFLSSDGPSPLKLSICPSVFLNKVPFPPAYNLLLPCYHSSTYYPTPEAHILEDLEEIAPGSQLVQSPPSPPIPLVSSNLKPLLKGYKRIIPDTEVHTQWFTQNKEVPSVSENQGLYPQPELQKFRSSTFLYSSEVWRKRPGDLRLHQHNPELPFAFLLYPFNPQEVLDRFEMPWRNMKQNEHPKASETAMPTASPLPISLTECQRVNPTGDLSQVKTLCQTTVQKENLQIYELPISAPCQLTVPVTEGTGPPGTPPGYEAQWGILAYKGIPQASDPLMPASCHPSGSLSKVKNVNPKERLSAPKDVRENLGYREHPHVSKSPVSAPSPPLDTLSDYQRENPPEDGSGFKPQWECKETSGSPWASETPTLDFHVGFYEATPMCVPLGSEAQLKGTPSTENLCVYADIVSSPSLPSVSLPDFAIMGPQRILLESKALWETKEQKKHLWTSDSSCPHKTPLAPFIGPKRINTVDDVPRSEATGKNTDNTKKCSSSEPPFLNLNPSPALVQQPLRVSPIENPLKSKAWCGHIQRKNNFLASELPAQSLSQHLLEPSPEGVLSDVEPAGGFMKNKNHCVSASPVWECSPSPNSVLKFHISEPSGDQCNCTPKESVAEWTKDSWANELPGSSFFSALSQEPHSETELVCRNVLEREASQGPNPPAVNPPQPTAWPIQPGLSEAKAEAPSSQGEAVSEVSDHPVIHAWQWSRQLKLRLNKLQQSPTFKSPGSHHSFSSSPVLNLTLESWGPSSCSQQMHPLSLHPCSSSSHPPKVQRAEALPVQAPHCLHSSSQPQAQASGRAEQRSQKSKRLKRKAMVQIPSPGLGHVKADENCSGMGEPSDTGLLVSGKRQDKTLVLLSTQKRGSSRKSKAEKCGRTARLGSPTNTRENNPAQACRPAEASMPRFSRKFEHKAQSSPHSALAQQLLPNAAGPQDRPRTGLVAGETQNPCPFKCCPWIPTKQQLSSLSQEAPPTRGFQKLIDKFLGVHRPLPTKSSP.

Disordered regions lie at residues 109–153, 469–555, 661–686, 843–884, 973–1032, and 1048–1087; these read TPIG…FPTF, LMPA…SPWA, TVDDVPRSEATGKNTDNTKKCSSSEP, ASQG…VSEV, CLHS…TGLL, and QKRGSSRKSKAEKCGRTARLGSPTNTRENNPAQACRPAEA. A compositionally biased stretch (basic and acidic residues) spans 124 to 134; that stretch reads CRSEGRPRATE. The segment covering 135 to 153 has biased composition (polar residues); the sequence is TQEQVLIQSPSPSRSFPTF. Residues 487 to 509 are compositionally biased toward basic and acidic residues; the sequence is NPKERLSAPKDVRENLGYREHPH. Residues 671-685 show a composition bias toward polar residues; sequence TGKNTDNTKKCSSSE. Residues 847–858 show a composition bias toward pro residues; sequence PNPPAVNPPQPT. Residues 975–984 are compositionally biased toward polar residues; it reads HSSSQPQAQA. Residues 993–1002 are compositionally biased toward basic residues; the sequence is QKSKRLKRKA. A compositionally biased stretch (polar residues) spans 1069 to 1079; the sequence is SPTNTRENNPA.

As to expression, expressed in kidney and testis. Expressed at lower levels in stomach, intestine, epididymis and ovary. Expressed at very low levels in heart and spleen.

Functionally, dispensable for normal development and fertility. This Mus musculus (Mouse) protein is Spermatogenesis-associated protein 31G1 (Spata31g1).